The chain runs to 279 residues: MSIDGLPPLRDVIERHGLQAKKALGQNFLLDLNLTGKIARSAGDLTNTAVIEVGPGPGGLTRALLSNGARRVVAIERDERCLAALAEVSAHYPGRLEVVSGDALKTDFAALASAAGGASGQVRIVANLPYNIGTELLVRWLTVVDWPPFYASMTLMFQREVAQRIVAEPGSDAYGRLGVLAGWRTKARIAFDVPPQAFTPPPKVTSSVVHLEPRATPLPADVKKLGRVTEAAFGQRRKMLRQSVKSLGGEALLERAGIDPTRRAETLSVEEFVRLTNSV.

S-adenosyl-L-methionine is bound by residues Asn-27, Leu-29, Gly-54, Glu-76, Asp-102, and Asn-127.

It belongs to the class I-like SAM-binding methyltransferase superfamily. rRNA adenine N(6)-methyltransferase family. RsmA subfamily.

It localises to the cytoplasm. It carries out the reaction adenosine(1518)/adenosine(1519) in 16S rRNA + 4 S-adenosyl-L-methionine = N(6)-dimethyladenosine(1518)/N(6)-dimethyladenosine(1519) in 16S rRNA + 4 S-adenosyl-L-homocysteine + 4 H(+). Specifically dimethylates two adjacent adenosines (A1518 and A1519) in the loop of a conserved hairpin near the 3'-end of 16S rRNA in the 30S particle. May play a critical role in biogenesis of 30S subunits. This Mesorhizobium japonicum (strain LMG 29417 / CECT 9101 / MAFF 303099) (Mesorhizobium loti (strain MAFF 303099)) protein is Ribosomal RNA small subunit methyltransferase A.